Reading from the N-terminus, the 307-residue chain is Thiohydrolase apmlB (307 aa).

This sequence belongs to the polyketide transferase af380 family.

Its function is as follows. Thiohydrolase; part of the gene cluster that mediates the biosynthesis of phaeospelide A, a fungal polyene macrolide with a 34-membered macrolactone ring and an all-trans conjugated hexaene structure. The HR-PKS ApmlA uses acetyl-CoA and malonyl-CoA as its starter and extender units, respectively, and provides the large carbon framework in phaeospelide via 16 cycles of polyketide chain elongation, which is the largest number identified in fungal iterative PKSs thus far. During round 1, the KR domain reduces beta -ketone to an L-oriented hydroxy group, while during later rounds, it provides hydroxy groups in the D-configuration. The characteristic conjugated hexaene moiety is built during the later rounds (10-15), when the KR and DH domains are at work but ER is off. Phylogenetic analysis of the DH domain suggests that a polyene formation is programmed in the DH domain. Finally, the mature ACP-tethered carbon chain is transferred to the serine residue of the thiohydrolase apmlB, followed by intramolecular macrolactonization, generating phaeospelide A. When one elongation cycle during rounds 7-9 is skipped, phaeospelide B is biosynthesized instead. This is Thiohydrolase apmlB from Arthrinium phaeospermum (Gymnosporium phaeospermum).